We begin with the raw amino-acid sequence, 91 residues long: Early E3B 10.4 kDa protein (91 aa).

An N-terminal signal peptide occupies residues 1–22; that stretch reads MIPRNFFFTILICPFNVCATFT. Residues 23–34 are Lumenal-facing; sequence AVATASPDCIGP. Residues 35–60 form a helical membrane-spanning segment; the sequence is FASYALFAFVTCICVCSIVCLVINFF. Topologically, residues 61-91 are cytoplasmic; sequence QLVDWIFVRIAYLRHHPEYRNQNVAALLRLI.

This sequence belongs to the adenoviridae E3B family.

The protein resides in the host endoplasmic reticulum membrane. Down-regulates the EGF receptor. This is Early E3B 10.4 kDa protein from Human adenovirus B serotype 3 (HAdV-3).